We begin with the raw amino-acid sequence, 938 residues long: Isoleucine--tRNA ligase (938 aa).

A 'HIGH' region motif is present at residues 58–68 (PYANGSIHIGH). Glu561 serves as a coordination point for L-isoleucyl-5'-AMP. The 'KMSKS' region signature appears at 602-606 (KMSKS). An ATP-binding site is contributed by Lys605. Residues Cys901, Cys904, Cys921, and Cys924 each contribute to the Zn(2+) site.

It belongs to the class-I aminoacyl-tRNA synthetase family. IleS type 1 subfamily. In terms of assembly, monomer. The cofactor is Zn(2+).

The protein resides in the cytoplasm. The catalysed reaction is tRNA(Ile) + L-isoleucine + ATP = L-isoleucyl-tRNA(Ile) + AMP + diphosphate. In terms of biological role, catalyzes the attachment of isoleucine to tRNA(Ile). As IleRS can inadvertently accommodate and process structurally similar amino acids such as valine, to avoid such errors it has two additional distinct tRNA(Ile)-dependent editing activities. One activity is designated as 'pretransfer' editing and involves the hydrolysis of activated Val-AMP. The other activity is designated 'posttransfer' editing and involves deacylation of mischarged Val-tRNA(Ile). The protein is Isoleucine--tRNA ligase of Klebsiella pneumoniae (strain 342).